The following is a 297-amino-acid chain: Virulence genes transcriptional activator (297 aa).

Residues 1–61 (MDFLINKKLK…IRKNGTLIPT (61 aa)) form the HTH lysR-type domain. A DNA-binding region (H-T-H motif) is located at residues 21–40 (FSIATSVLYITRTPLSRVIS).

The protein belongs to the LysR transcriptional regulatory family.

The protein localises to the cytoplasm. Functionally, positive regulator for the plasmid-encoded virulence factors SpvA, SpvB, and SpvC. This is Virulence genes transcriptional activator (mkaC) from Salmonella typhimurium (strain LT2 / SGSC1412 / ATCC 700720).